Reading from the N-terminus, the 150-residue chain is MPTFKLVLSDPRSGKSKQLEVKDEVAQRLIGLRIGDVFDAQLIKEIIDLPQGFRIKITGGTGYDGAPMHPGIEGPVKKYALLSGRPGFRPEKKGLRVRRLIRGNTISDQIVQVNAVLVYPENWDKEPVIQVSGEAKPTEAKAEEKAEAAQ.

Belongs to the eukaryotic ribosomal protein eS6 family.

The sequence is that of Small ribosomal subunit protein eS6 from Caldivirga maquilingensis (strain ATCC 700844 / DSM 13496 / JCM 10307 / IC-167).